A 210-amino-acid chain; its full sequence is Inner membrane-spanning protein YciB (210 aa).

Helical transmembrane passes span 19-39, 53-73, 78-98, 115-135, 148-168, and 175-195; these read LVLE…GDWL, IFIA…VSWI, LPMM…LTLW, LFGA…GYVF, KLTI…EIVW, and FWVA…TLAQ.

Belongs to the YciB family.

Its subcellular location is the cell inner membrane. Plays a role in cell envelope biogenesis, maintenance of cell envelope integrity and membrane homeostasis. This chain is Inner membrane-spanning protein YciB, found in Sinorhizobium fredii (strain NBRC 101917 / NGR234).